Reading from the N-terminus, the 222-residue chain is Putative RING finger protein ORF118 (222 aa).

The RING-type zinc-finger motif lies at cysteine 78–asparagine 114. A disordered region spans residues isoleucine 184 to isoleucine 222. A compositionally biased stretch (low complexity) spans histidine 189 to glutamate 198. The segment covering proline 209–isoleucine 222 has biased composition (basic residues).

This Magallana gigas (Pacific oyster) protein is Putative RING finger protein ORF118.